The chain runs to 579 residues: 2-isopropylmalate synthase (579 aa).

The 275-residue stretch at 40-314 (PRWCAVDLRD…DPMIDFSDID (275 aa)) folds into the Pyruvate carboxyltransferase domain. Mg(2+)-binding residues include aspartate 49, histidine 253, histidine 255, and asparagine 289. Residues 456–579 (SGKADGQWGR…VNRAIRDAQS (124 aa)) form a regulatory domain region.

Belongs to the alpha-IPM synthase/homocitrate synthase family. LeuA type 2 subfamily. In terms of assembly, homodimer. Mg(2+) serves as cofactor.

Its subcellular location is the cytoplasm. It carries out the reaction 3-methyl-2-oxobutanoate + acetyl-CoA + H2O = (2S)-2-isopropylmalate + CoA + H(+). The protein operates within amino-acid biosynthesis; L-leucine biosynthesis; L-leucine from 3-methyl-2-oxobutanoate: step 1/4. In terms of biological role, catalyzes the condensation of the acetyl group of acetyl-CoA with 3-methyl-2-oxobutanoate (2-ketoisovalerate) to form 3-carboxy-3-hydroxy-4-methylpentanoate (2-isopropylmalate). The chain is 2-isopropylmalate synthase from Pseudarthrobacter chlorophenolicus (strain ATCC 700700 / DSM 12829 / CIP 107037 / JCM 12360 / KCTC 9906 / NCIMB 13794 / A6) (Arthrobacter chlorophenolicus).